A 77-amino-acid chain; its full sequence is U8-lycotoxin-Ls1m (77 aa).

Residues 1 to 20 form the signal peptide; it reads MKLMIFTGLVLFAIVRLIEA. Residues 21–26 constitute a propeptide that is removed on maturation; it reads QAENEK.

The protein belongs to the neurotoxin 19 (CSTX) family. 08 (U8-Lctx) subfamily. Contains 4 disulfide bonds. In terms of tissue distribution, expressed by the venom gland.

The protein localises to the secreted. The sequence is that of U8-lycotoxin-Ls1m from Lycosa singoriensis (Wolf spider).